Reading from the N-terminus, the 429-residue chain is Carboxypeptidase B (429 aa).

A signal peptide spans 1–15 (MKFLLVLALCAVVYA). The 303-residue stretch at 121-423 (NYQELEVIDE…EGIVVGARRA (303 aa)) folds into the Peptidase M14 domain. The Zn(2+) site is built by His182 and Glu185. Substrate contacts are provided by residues 182-185 (HARE), Arg236, and 256-257 (NR). A disulfide bridge connects residues Cys250 and Cys273. His309 provides a ligand contact to Zn(2+). Residues 310–311 (SF) and Tyr365 contribute to the substrate site. Glu387 serves as the catalytic Proton donor/acceptor.

It belongs to the peptidase M14 family. Requires Zn(2+) as cofactor.

It is found in the secreted. It catalyses the reaction Preferential release of a C-terminal lysine or arginine amino acid.. With respect to regulation, highly resistant to inhibition by potato carboxypeptidase inhibitor (PCI). Moderately inhibited by leech carboxypeptidase inhibitor (LCI) and tick carboxypeptidase inhibitor (TCI). In terms of biological role, metalloprotease which cleaves a single amino acid from the C-terminal end of polypeptide chains. Shows a strong preference for peptides with a terminal lysine residue. In Helicoverpa zea (Corn earworm moth), this protein is Carboxypeptidase B.